A 509-amino-acid polypeptide reads, in one-letter code: uncharacterized protein (509 aa).

The protein belongs to the MG032/MG096/MG288 family.

This is an uncharacterized protein from Mycoplasma pneumoniae (strain ATCC 29342 / M129 / Subtype 1) (Mycoplasmoides pneumoniae).